The primary structure comprises 54 residues: Large ribosomal subunit protein bL32c (54 aa).

The protein belongs to the bacterial ribosomal protein bL32 family.

The protein resides in the plastid. It is found in the chloroplast. This chain is Large ribosomal subunit protein bL32c, found in Gossypium barbadense (Sea Island cotton).